Reading from the N-terminus, the 538-residue chain is T-complex protein 1 subunit epsilon (538 aa).

It belongs to the TCP-1 chaperonin family. In terms of assembly, heterooligomeric complex of about 850 to 900 kDa that forms two stacked rings, 12 to 16 nm in diameter.

Its subcellular location is the cytoplasm. Molecular chaperone; assists the folding of proteins upon ATP hydrolysis. Known to play a role, in vitro, in the folding of actin and tubulin. This Dictyostelium discoideum (Social amoeba) protein is T-complex protein 1 subunit epsilon (cct5).